Consider the following 302-residue polypeptide: Glycine--tRNA ligase alpha subunit (302 aa).

It belongs to the class-II aminoacyl-tRNA synthetase family. Tetramer of two alpha and two beta subunits.

The protein localises to the cytoplasm. It catalyses the reaction tRNA(Gly) + glycine + ATP = glycyl-tRNA(Gly) + AMP + diphosphate. This Haemophilus influenzae (strain PittGG) protein is Glycine--tRNA ligase alpha subunit.